The sequence spans 426 residues: Serine--tRNA ligase (426 aa).

Thr-233–Glu-235 provides a ligand contact to L-serine. Arg-264–Glu-266 contributes to the ATP binding site. Glu-287 is a binding site for L-serine. Glu-351–Ser-354 is an ATP binding site. Ser-386 contacts L-serine.

The protein belongs to the class-II aminoacyl-tRNA synthetase family. Type-1 seryl-tRNA synthetase subfamily. In terms of assembly, homodimer. The tRNA molecule binds across the dimer.

It localises to the cytoplasm. It carries out the reaction tRNA(Ser) + L-serine + ATP = L-seryl-tRNA(Ser) + AMP + diphosphate + H(+). It catalyses the reaction tRNA(Sec) + L-serine + ATP = L-seryl-tRNA(Sec) + AMP + diphosphate + H(+). The protein operates within aminoacyl-tRNA biosynthesis; selenocysteinyl-tRNA(Sec) biosynthesis; L-seryl-tRNA(Sec) from L-serine and tRNA(Sec): step 1/1. Functionally, catalyzes the attachment of serine to tRNA(Ser). Is also able to aminoacylate tRNA(Sec) with serine, to form the misacylated tRNA L-seryl-tRNA(Sec), which will be further converted into selenocysteinyl-tRNA(Sec). This is Serine--tRNA ligase from Prochlorococcus marinus (strain NATL2A).